Reading from the N-terminus, the 256-residue chain is Sugar fermentation stimulation protein homolog (256 aa).

Low complexity predominate over residues T128–T141. Residues T128 to K149 are disordered.

This sequence belongs to the SfsA family.

The protein is Sugar fermentation stimulation protein homolog of Shewanella sediminis (strain HAW-EB3).